We begin with the raw amino-acid sequence, 470 residues long: ATP synthase subunit beta (470 aa).

Position 155–162 (G155–T162) interacts with ATP.

The protein belongs to the ATPase alpha/beta chains family. In terms of assembly, F-type ATPases have 2 components, CF(1) - the catalytic core - and CF(0) - the membrane proton channel. CF(1) has five subunits: alpha(3), beta(3), gamma(1), delta(1), epsilon(1). CF(0) has three main subunits: a(1), b(2) and c(9-12). The alpha and beta chains form an alternating ring which encloses part of the gamma chain. CF(1) is attached to CF(0) by a central stalk formed by the gamma and epsilon chains, while a peripheral stalk is formed by the delta and b chains.

It localises to the cell membrane. The enzyme catalyses ATP + H2O + 4 H(+)(in) = ADP + phosphate + 5 H(+)(out). In terms of biological role, produces ATP from ADP in the presence of a proton gradient across the membrane. The catalytic sites are hosted primarily by the beta subunits. The polypeptide is ATP synthase subunit beta (Pectinatus frisingensis).